The following is a 305-amino-acid chain: Sulfate adenylyltransferase subunit 2 (305 aa).

A disordered region spans residues 283 to 305 (RQGRVIDHDQSASMEKKKQEGYF).

This sequence belongs to the PAPS reductase family. CysD subfamily. As to quaternary structure, heterodimer composed of CysD, the smaller subunit, and CysN.

The enzyme catalyses sulfate + ATP + H(+) = adenosine 5'-phosphosulfate + diphosphate. The protein operates within sulfur metabolism; hydrogen sulfide biosynthesis; sulfite from sulfate: step 1/3. In terms of biological role, with CysN forms the ATP sulfurylase (ATPS) that catalyzes the adenylation of sulfate producing adenosine 5'-phosphosulfate (APS) and diphosphate, the first enzymatic step in sulfur assimilation pathway. APS synthesis involves the formation of a high-energy phosphoric-sulfuric acid anhydride bond driven by GTP hydrolysis by CysN coupled to ATP hydrolysis by CysD. This chain is Sulfate adenylyltransferase subunit 2, found in Caulobacter sp. (strain K31).